Consider the following 166-residue polypeptide: KH homology domain-containing protein 1C (166 aa).

The KH; atypical domain occupies Pro-19–Met-78.

It belongs to the KHDC1 family.

The sequence is that of KH homology domain-containing protein 1C (Khdc1c) from Mus musculus (Mouse).